A 160-amino-acid chain; its full sequence is Aspartate 1-decarboxylase 2 (160 aa).

Serine 25 (schiff-base intermediate with substrate; via pyruvic acid) is an active-site residue. Serine 25 is modified (pyruvic acid (Ser)). Threonine 57 contributes to the substrate binding site. Tyrosine 58 acts as the Proton donor in catalysis. Residue 73–75 participates in substrate binding; the sequence is GAA.

It belongs to the PanD family. In terms of assembly, heterooctamer of four alpha and four beta subunits. The cofactor is pyruvate. Post-translationally, is synthesized initially as an inactive proenzyme, which is activated by self-cleavage at a specific serine bond to produce a beta-subunit with a hydroxyl group at its C-terminus and an alpha-subunit with a pyruvoyl group at its N-terminus.

Its subcellular location is the cytoplasm. It catalyses the reaction L-aspartate + H(+) = beta-alanine + CO2. Its pathway is cofactor biosynthesis; (R)-pantothenate biosynthesis; beta-alanine from L-aspartate: step 1/1. Catalyzes the pyruvoyl-dependent decarboxylation of aspartate to produce beta-alanine. The chain is Aspartate 1-decarboxylase 2 from Frankia casuarinae (strain DSM 45818 / CECT 9043 / HFP020203 / CcI3).